Here is a 249-residue protein sequence, read N- to C-terminus: Phosphatidylserine decarboxylase proenzyme (249 aa).

Ser208 functions as the Schiff-base intermediate with substrate; via pyruvic acid in the catalytic mechanism. At Ser208 the chain carries Pyruvic acid (Ser); by autocatalysis.

This sequence belongs to the phosphatidylserine decarboxylase family. PSD-A subfamily. As to quaternary structure, heterodimer of a large membrane-associated beta subunit and a small pyruvoyl-containing alpha subunit. It depends on pyruvate as a cofactor. Is synthesized initially as an inactive proenzyme. Formation of the active enzyme involves a self-maturation process in which the active site pyruvoyl group is generated from an internal serine residue via an autocatalytic post-translational modification. Two non-identical subunits are generated from the proenzyme in this reaction, and the pyruvate is formed at the N-terminus of the alpha chain, which is derived from the carboxyl end of the proenzyme. The post-translation cleavage follows an unusual pathway, termed non-hydrolytic serinolysis, in which the side chain hydroxyl group of the serine supplies its oxygen atom to form the C-terminus of the beta chain, while the remainder of the serine residue undergoes an oxidative deamination to produce ammonia and the pyruvoyl prosthetic group on the alpha chain.

It is found in the cell membrane. The catalysed reaction is a 1,2-diacyl-sn-glycero-3-phospho-L-serine + H(+) = a 1,2-diacyl-sn-glycero-3-phosphoethanolamine + CO2. Its pathway is phospholipid metabolism; phosphatidylethanolamine biosynthesis; phosphatidylethanolamine from CDP-diacylglycerol: step 2/2. Its function is as follows. Catalyzes the formation of phosphatidylethanolamine (PtdEtn) from phosphatidylserine (PtdSer). This is Phosphatidylserine decarboxylase proenzyme from Erythrobacter litoralis (strain HTCC2594).